Consider the following 141-residue polypeptide: Nucleoside diphosphate kinase (141 aa).

6 residues coordinate ATP: Lys-9, Phe-57, Arg-85, Thr-91, Arg-102, and Asn-112. The active-site Pros-phosphohistidine intermediate is the His-115.

The protein belongs to the NDK family. In terms of assembly, homotetramer. The cofactor is Mg(2+).

Its subcellular location is the cytoplasm. The catalysed reaction is a 2'-deoxyribonucleoside 5'-diphosphate + ATP = a 2'-deoxyribonucleoside 5'-triphosphate + ADP. The enzyme catalyses a ribonucleoside 5'-diphosphate + ATP = a ribonucleoside 5'-triphosphate + ADP. Its function is as follows. Major role in the synthesis of nucleoside triphosphates other than ATP. The ATP gamma phosphate is transferred to the NDP beta phosphate via a ping-pong mechanism, using a phosphorylated active-site intermediate. This is Nucleoside diphosphate kinase from Chlamydia trachomatis serovar A (strain ATCC VR-571B / DSM 19440 / HAR-13).